Consider the following 330-residue polypeptide: 2-oxoisovalerate dehydrogenase subunit alpha (330 aa).

Substrate-binding positions include Phe-44, Tyr-73, 107–110 (MPGH), and Ser-123. A thiamine diphosphate-binding site is contributed by 72 to 74 (YYR). Residues 123–125 (SPV), 153–159 (GEGSSNQ), 183–187 (NKYAI), and His-252 contribute to the thiamine diphosphate site. Residues Glu-154, Asn-183, and Tyr-185 each contribute to the Mg(2+) site. The interval 249 to 272 (LTPHSSDDDDSSYRGREEVEEAKK) is disordered. The span at 259-272 (SSYRGREEVEEAKK) shows a compositional bias: basic and acidic residues.

The protein belongs to the BCKDHA family. Heterotetramer of two alpha and two beta chains. Directly associated with ODBB in the E1 complex. Requires thiamine diphosphate as cofactor.

It carries out the reaction N(6)-[(R)-lipoyl]-L-lysyl-[protein] + 3-methyl-2-oxobutanoate + H(+) = N(6)-[(R)-S(8)-2-methylpropanoyldihydrolipoyl]-L-lysyl-[protein] + CO2. Its function is as follows. The branched-chain alpha-keto dehydrogenase complex catalyzes the overall conversion of alpha-keto acids to acyl-CoA and CO(2). It contains multiple copies of three enzymatic components: branched-chain alpha-keto acid decarboxylase (E1), lipoamide acyltransferase (E2) and lipoamide dehydrogenase (E3). The polypeptide is 2-oxoisovalerate dehydrogenase subunit alpha (bfmBAA) (Bacillus subtilis (strain 168)).